A 66-amino-acid polypeptide reads, in one-letter code: U1-theraphotoxin-Cg1a 1 (66 aa).

A signal peptide spans Met1–Ala21. The propeptide occupies Ala22 to Arg29. 3 cysteine pairs are disulfide-bonded: Cys31–Cys46, Cys38–Cys51, and Cys45–Cys58. Pro63 is modified (proline amide).

It belongs to the neurotoxin 10 (Hwtx-1) family. 46 (Jztx-7/10/12) subfamily. As to expression, expressed by the venom gland.

It is found in the secreted. Functionally, probable ion channel inhibitor. The protein is U1-theraphotoxin-Cg1a 1 of Chilobrachys guangxiensis (Chinese earth tiger tarantula).